Reading from the N-terminus, the 428-residue chain is uncharacterized protein (428 aa).

Zn(2+) is bound at residue histidine 68. The active-site Proton acceptor is glutamate 71. Zn(2+) contacts are provided by histidine 72 and glutamate 143.

Belongs to the peptidase M16 family. It depends on Zn(2+) as a cofactor.

This is an uncharacterized protein from Bacillus subtilis (strain 168).